Reading from the N-terminus, the 134-residue chain is Ribosome-binding factor A (134 aa).

The protein belongs to the RbfA family. In terms of assembly, monomer. Binds 30S ribosomal subunits, but not 50S ribosomal subunits or 70S ribosomes.

It is found in the cytoplasm. Its function is as follows. One of several proteins that assist in the late maturation steps of the functional core of the 30S ribosomal subunit. Associates with free 30S ribosomal subunits (but not with 30S subunits that are part of 70S ribosomes or polysomes). Required for efficient processing of 16S rRNA. May interact with the 5'-terminal helix region of 16S rRNA. The polypeptide is Ribosome-binding factor A (Cyanothece sp. (strain PCC 7425 / ATCC 29141)).